The following is a 366-amino-acid chain: Di-N-acetylchitobiase (366 aa).

Positions 1 to 22 (MALCGLPEFTLLLLPLLARLSA) are cleaved as a signal peptide. In terms of domain architecture, GH18 spans 23–366 (GDCPCSEAAL…EMWGALKPRL (344 aa)). Catalysis depends on Glu127, which acts as the Proton donor. N-linked (GlcNAc...) asparagine glycosylation is found at Asn131, Asn177, Asn212, Asn246, and Asn283.

It belongs to the glycosyl hydrolase 18 family.

It is found in the lysosome. In terms of biological role, involved in the degradation of asparagine-linked glycoproteins. Hydrolyze of N-acetyl-beta-D-glucosamine (1-4)N-acetylglucosamine chitobiose core from the reducing end of the bond, it requires prior cleavage by glycosylasparaginase. The chain is Di-N-acetylchitobiase (Ctbs) from Mus musculus (Mouse).